Consider the following 487-residue polypeptide: NADH-quinone oxidoreductase subunit N (487 aa).

13 helical membrane-spanning segments follow: residues 18-38 (LVPE…DLFV), 44-64 (VWTH…LATG), 84-104 (VMKT…WTYL), 116-136 (VLVL…SLLM), 169-189 (FVLG…VYGA), 211-231 (LLTG…AAPF), 242-262 (APAP…FGMA), 277-297 (WHLL…LMAI), 305-325 (MLAY…AGGG), 333-353 (MFYA…IIAL), 377-397 (AGLV…LGFW), 410-430 (DMLW…YYYL), and 457-477 (VLGV…PIMV).

Belongs to the complex I subunit 2 family. NDH-1 is composed of 14 different subunits. Subunits NuoA, H, J, K, L, M, N constitute the membrane sector of the complex.

It localises to the cell inner membrane. It carries out the reaction a quinone + NADH + 5 H(+)(in) = a quinol + NAD(+) + 4 H(+)(out). NDH-1 shuttles electrons from NADH, via FMN and iron-sulfur (Fe-S) centers, to quinones in the respiratory chain. The immediate electron acceptor for the enzyme in this species is believed to be ubiquinone. Couples the redox reaction to proton translocation (for every two electrons transferred, four hydrogen ions are translocated across the cytoplasmic membrane), and thus conserves the redox energy in a proton gradient. In Xanthomonas euvesicatoria pv. vesicatoria (strain 85-10) (Xanthomonas campestris pv. vesicatoria), this protein is NADH-quinone oxidoreductase subunit N.